Consider the following 319-residue polypeptide: MLALDARAEVDRIVDTLRKQVLGTLRRRGVVVGLSGGIDSSVVATLCTRAFGKDKVLGLFMPERDSSGDSLRLGRRVAAQLGIENILEDIGPAVEAVGAYRRQLEAIRTVVPDYGDGWKCKLVIEPVLESNGLNITRLTVQDPEGKVDTVRLSPAAYLQIVAATNYKQRLRKMTEYYHADRLKYAVAGTPNRLEYDQGFFVKQGDGTADVMPIVHLYKTQVYQLAEYLGVDEEIRQRPPTTDTFSMAQSQEEFYFALPYHLMDLCLYGLNHGIASDEVAAVAGLTEPQLQKVYKDIDAKRRAAHYLHARPLLSVEIGED.

33–40 contacts ATP; sequence GLSGGIDS. D39 serves as a coordination point for Mg(2+). R169 contributes to the deamido-NAD(+) binding site. T189 provides a ligand contact to ATP. Residue E194 coordinates Mg(2+). Residues K202 and D209 each coordinate deamido-NAD(+). Residues K218 and T240 each coordinate ATP.

The protein belongs to the NAD synthetase family. In terms of assembly, homodimer.

The enzyme catalyses deamido-NAD(+) + NH4(+) + ATP = AMP + diphosphate + NAD(+) + H(+). It participates in cofactor biosynthesis; NAD(+) biosynthesis; NAD(+) from deamido-NAD(+) (ammonia route): step 1/1. Functionally, catalyzes the ATP-dependent amidation of deamido-NAD to form NAD. Uses ammonia as a nitrogen source. This chain is NH(3)-dependent NAD(+) synthetase, found in Mesorhizobium japonicum (strain LMG 29417 / CECT 9101 / MAFF 303099) (Mesorhizobium loti (strain MAFF 303099)).